The sequence spans 207 residues: Intraflagellar transport protein 43 homolog A (207 aa).

A disordered region spans residues 1–104 (MDDNLQLGDS…GSDDEGDIPV (104 aa)).

It belongs to the IFT43 family. Component of IFT complex A.

Its function is as follows. Component of IFT complex A (IFT-A) involved in retrograde ciliary transport along microtubules from the ciliary tip to the base. The protein is Intraflagellar transport protein 43 homolog A (ift43a) of Salmo salar (Atlantic salmon).